Reading from the N-terminus, the 228-residue chain is Aldehyde dehydrogenase 9 (228 aa).

NAD(+) is bound at residue 76 to 81; it reads GSTETA. Catalysis depends on residues glutamate 99 and cysteine 132.

This sequence belongs to the aldehyde dehydrogenase family.

It carries out the reaction an aldehyde + NAD(+) + H2O = a carboxylate + NADH + 2 H(+). The protein operates within alcohol metabolism; ethanol degradation; acetate from ethanol: step 2/2. The chain is Aldehyde dehydrogenase 9 (ALDH9) from Polyandrocarpa misakiensis (Tunicate).